Here is a 363-residue protein sequence, read N- to C-terminus: MSLKHFIQDALSSWMKQKGPESDIVLSSRIRLARNFEHIRFPTRYSNEEASSIIQQFEDQFSEQEIPGIGKFVLIRMNDAQPLEKRVLVEKHLISPNLTESPFGGCLLSENEEVSVMLNEEDHIRIQCLFPGFQLLEAMKAANQVDDWIEEKVDYAFNEQRGYLTSCPTNVGTGLRASVMMHLPALVLTRQINRIIPAINQLGLVVRGIYGEGSEAVGNIFQISNQITLGKSEQDIVEDLNSVAAQLIEQERSAREAIYQTSKIELEDRVYRSYGVLSNCRMIESKETAKCLSDVRLGIDLGIIKGLSSNILNELMILTQPGFLQQYSGGALRPNERDIRRAALIRERLHLEMNGKRQEDESI.

Residues 24-254 (IVLSSRIRLA…AQLIEQERSA (231 aa)) form the Phosphagen kinase C-terminal domain. 27 to 31 (SSRIR) contributes to the ATP binding site. Phosphoarginine; by autocatalysis is present on residues R29, R40, and R86. Residues H92, R125, and 176 to 180 (RASVM) contribute to the ATP site. R190 bears the Phosphoarginine; by autocatalysis mark. Residue 207-212 (RGIYGE) coordinates ATP. R255, R269, and R272 each carry phosphoarginine; by autocatalysis. The RDXXRA motif of the pArg binding pocket involved in allosteric regulation motif lies at 337-342 (RDIRRA). R346 carries the post-translational modification Phosphoarginine; by autocatalysis.

It belongs to the ATP:guanido phosphotransferase family. Interacts with CtsR in its autophosphorylated form. Interacts with McsA in nonstressed as well as in heat-stressed cells, whereas strongly interacts with ClpC only in nonstressed cells. Post-translationally, autophosphorylated on Arg residues. Phosphorylation on Arg-40 and Arg-86 are up-regulated upon stress conditions.

It localises to the cytoplasm. The catalysed reaction is L-arginyl-[protein] + ATP = N(omega)-phospho-L-arginyl-[protein] + ADP + H(+). With respect to regulation, appears to be allosterically activated by the binding of pArg-containing polypeptides to the pArg-binding pocket localized in the C-terminal domain of McsB. The McsB kinase is inhibited in nonstressed cells by direct interaction with ClpC; upon heat exposure, the interaction of McsB with ClpC is dramatically decreased, leading to McsB release and activation during heat stress. Its kinase activity is counteracted by the protein-arginine-phosphatase YwlE in vivo. Requires McsA for full kinase activity. In terms of biological role, catalyzes the specific phosphorylation of arginine residues in a large number of proteins. Is part of the bacterial stress response system, where it is involved in regulating the global heat shock repressor CtsR; phosphorylates arginine residues in the winged helix-turn-helix domain of CtsR, thereby preventing its binding to DNA and consequently inducing the expression of repressed genes. The transcriptional repressor HrcA, the chaperone GroEL, the unfoldase ClpC, together with several ribosomal subunits, represent other physiological targets of McsB under stress conditions. Protein arginine phosphorylation has a physiologically important role and is involved in the regulation of many critical cellular processes, such as protein homeostasis, motility, competence, and stringent and stress responses, by regulating gene expression and protein activity. Functions as an adapter whose kinase activity is required for ClpCP-mediated degradation of CtsR during heat stress. Is required for the delocalization of competence proteins from the cell poles, probably via a role in the degradation of anchor proteins. The polypeptide is Protein-arginine kinase (Bacillus subtilis (strain 168)).